The sequence spans 505 residues: MSLATLDSMGGASTGSVTVTEQLNFWAGRRVGGRNSEHAEPVFEPATGRVLCQMVPCGAEEVDEAIMSAHAAYVQWSKKSGTERARVMLEAARIIRERREKIAKLEVINNGKSITEALVDIDVAWQCIEYYAGVAGTLAGQHFQLPGGAFAYTRREPLGVCVGIGAWNYPFQIAACKSAPALACGNAMVFKPSPFTPVTAVILAEIYKEAGVPDGLFCVVQGGAETGSLLCNHPKVAKVSFTGSVPTGKKVMEMSAKGVKQVTLELGGKSPLIIFKDCDLENAVKGALMANFLTQGQVCCNGTRVFVHKDILPQFLEEVVKRTKAIAVGDPLLDSTRMGALITKPHLEKVLGFVRQAKKEGGRVLCGGEPFVPSDPKLKGGYFMSPCILDNCRDDMTCVKEEIFGPVMSVLPFDTEEEVIRRANNTTFGLASGVFTRDISRAHRVAASLEAGTCFINNYNISPVEVPFGGYKMSGFGRENGQVTIEYYSQLKTVVVETGDVENYF.

NAD(+)-binding positions include lysine 191 and 243-247 (GSVPT). The active-site Proton acceptor is the glutamate 265. The Nucleophile role is filled by cysteine 299. Glutamate 402 is a binding site for NAD(+).

The protein belongs to the aldehyde dehydrogenase family. Homotetramer. As to expression, constitutively expressed in all organs tested: brain, eye, gill, GI, heart, liver, kidney, muscle, skin, testis and ovary.

It is found in the cytoplasm. The protein resides in the cytosol. It carries out the reaction 4-(trimethylamino)butanal + NAD(+) + H2O = 4-(trimethylamino)butanoate + NADH + 2 H(+). It catalyses the reaction an aldehyde + NAD(+) + H2O = a carboxylate + NADH + 2 H(+). It functions in the pathway amine and polyamine biosynthesis; carnitine biosynthesis. In terms of biological role, converts gamma-trimethylaminobutyraldehyde into gamma-butyrobetaine with high efficiency (in vitro). Can catalyze the irreversible oxidation of a broad range of aldehydes to the corresponding acids in an NAD-dependent reaction, but with low efficiency. The sequence is that of 4-trimethylaminobutyraldehyde dehydrogenase (aldh9A1) from Oryzias latipes (Japanese rice fish).